We begin with the raw amino-acid sequence, 52 residues long: Mitogenic lectin alpha chain (52 aa).

Belongs to the leguminous lectin family. In terms of assembly, tetramer of two alpha and two beta chains.

The protein is Mitogenic lectin alpha chain of Vicia sativa (Spring vetch).